Consider the following 140-residue polypeptide: Small ribosomal subunit protein uS19 (140 aa).

Residues 43-71 (IERGLTTEQQKLRETVRDADPQKTANDPI) are disordered. Over residues 52 to 63 (QKLRETVRDADP) the composition is skewed to basic and acidic residues.

The protein belongs to the universal ribosomal protein uS19 family.

Functionally, protein S19 forms a complex with S13 that binds strongly to the 16S ribosomal RNA. This chain is Small ribosomal subunit protein uS19, found in Haloquadratum walsbyi (strain DSM 16790 / HBSQ001).